A 618-amino-acid polypeptide reads, in one-letter code: DNA mismatch repair protein MutL (618 aa).

The protein belongs to the DNA mismatch repair MutL/HexB family.

This protein is involved in the repair of mismatches in DNA. It is required for dam-dependent methyl-directed DNA mismatch repair. May act as a 'molecular matchmaker', a protein that promotes the formation of a stable complex between two or more DNA-binding proteins in an ATP-dependent manner without itself being part of a final effector complex. This is DNA mismatch repair protein MutL from Porphyromonas gingivalis (strain ATCC BAA-308 / W83).